The chain runs to 299 residues: tRNA dimethylallyltransferase (299 aa).

13-20 (GPTASGKT) provides a ligand contact to ATP. A substrate-binding site is contributed by 15 to 20 (TASGKT). The interval 38–41 (DSRQ) is interaction with substrate tRNA.

The protein belongs to the IPP transferase family. In terms of assembly, monomer. Mg(2+) serves as cofactor.

The enzyme catalyses adenosine(37) in tRNA + dimethylallyl diphosphate = N(6)-dimethylallyladenosine(37) in tRNA + diphosphate. In terms of biological role, catalyzes the transfer of a dimethylallyl group onto the adenine at position 37 in tRNAs that read codons beginning with uridine, leading to the formation of N6-(dimethylallyl)adenosine (i(6)A). The polypeptide is tRNA dimethylallyltransferase (Synechococcus sp. (strain CC9605)).